The chain runs to 84 residues: Sulfur carrier protein TusA (84 aa).

Cysteine 19 (cysteine persulfide intermediate) is an active-site residue.

The protein belongs to the sulfur carrier protein TusA family. In terms of assembly, interacts with IscS.

It localises to the cytoplasm. It functions in the pathway tRNA modification. In terms of biological role, sulfur carrier protein involved in sulfur trafficking in the cell. Part of a sulfur-relay system required for 2-thiolation during synthesis of 2-thiouridine of the modified wobble base 5-methylaminomethyl-2-thiouridine (mnm(5)s(2)U) in tRNA. Interacts with IscS and stimulates its cysteine desulfurase activity. Accepts an activated sulfur from IscS, which is then transferred to TusD, and thus determines the direction of sulfur flow from IscS to 2-thiouridine formation. Also appears to be involved in sulfur transfer for the biosynthesis of molybdopterin. The sequence is that of Sulfur carrier protein TusA from Yersinia enterocolitica serotype O:8 / biotype 1B (strain NCTC 13174 / 8081).